The primary structure comprises 62 residues: Sperm protamine P1 (62 aa).

Positions 1 to 62 (MARYRHSXSR…RYSRRRRRRY (62 aa)) are disordered.

This sequence belongs to the protamine P1 family. In terms of tissue distribution, testis.

It is found in the nucleus. The protein localises to the chromosome. In terms of biological role, protamines substitute for histones in the chromatin of sperm during the haploid phase of spermatogenesis. They compact sperm DNA into a highly condensed, stable and inactive complex. In Petrogale xanthopus (Yellow-footed rock wallaby), this protein is Sperm protamine P1 (PRM1).